Reading from the N-terminus, the 523-residue chain is Maturase K (523 aa).

It belongs to the intron maturase 2 family. MatK subfamily.

It localises to the plastid. Its subcellular location is the chloroplast. Usually encoded in the trnK tRNA gene intron. Probably assists in splicing its own and other chloroplast group II introns. The chain is Maturase K from Asphodeline lutea (King's spear).